Here is a 334-residue protein sequence, read N- to C-terminus: Holliday junction branch migration complex subunit RuvB (334 aa).

The large ATPase domain (RuvB-L) stretch occupies residues 1 to 181 (MTRILDNDLM…FGITGHMEYY (181 aa)). ATP-binding positions include Leu-20, Arg-21, Gly-62, Lys-65, Thr-66, Thr-67, 128–130 (EDF), Arg-171, Tyr-181, and Arg-218. Residue Thr-66 coordinates Mg(2+). The interval 182 to 252 (QVDDLTEIVE…MTDKALEMLD (71 aa)) is small ATPAse domain (RuvB-S). Residues 255 to 334 (HEGLDYVDQK…LKYPLDTKTE (80 aa)) form a head domain (RuvB-H) region. DNA is bound by residues Arg-291, Arg-310, Arg-312, and Arg-315.

Belongs to the RuvB family. As to quaternary structure, homohexamer. Forms an RuvA(8)-RuvB(12)-Holliday junction (HJ) complex. HJ DNA is sandwiched between 2 RuvA tetramers; dsDNA enters through RuvA and exits via RuvB. An RuvB hexamer assembles on each DNA strand where it exits the tetramer. Each RuvB hexamer is contacted by two RuvA subunits (via domain III) on 2 adjacent RuvB subunits; this complex drives branch migration. In the full resolvosome a probable DNA-RuvA(4)-RuvB(12)-RuvC(2) complex forms which resolves the HJ.

The protein resides in the cytoplasm. The enzyme catalyses ATP + H2O = ADP + phosphate + H(+). The RuvA-RuvB-RuvC complex processes Holliday junction (HJ) DNA during genetic recombination and DNA repair, while the RuvA-RuvB complex plays an important role in the rescue of blocked DNA replication forks via replication fork reversal (RFR). RuvA specifically binds to HJ cruciform DNA, conferring on it an open structure. The RuvB hexamer acts as an ATP-dependent pump, pulling dsDNA into and through the RuvAB complex. RuvB forms 2 homohexamers on either side of HJ DNA bound by 1 or 2 RuvA tetramers; 4 subunits per hexamer contact DNA at a time. Coordinated motions by a converter formed by DNA-disengaged RuvB subunits stimulates ATP hydrolysis and nucleotide exchange. Immobilization of the converter enables RuvB to convert the ATP-contained energy into a lever motion, pulling 2 nucleotides of DNA out of the RuvA tetramer per ATP hydrolyzed, thus driving DNA branch migration. The RuvB motors rotate together with the DNA substrate, which together with the progressing nucleotide cycle form the mechanistic basis for DNA recombination by continuous HJ branch migration. Branch migration allows RuvC to scan DNA until it finds its consensus sequence, where it cleaves and resolves cruciform DNA. The polypeptide is Holliday junction branch migration complex subunit RuvB (Streptococcus uberis (strain ATCC BAA-854 / 0140J)).